Reading from the N-terminus, the 801-residue chain is MKDQLLVPLRRRPWTCQKCLQRLQLPRHQTRRSFETAASPFPRPLDSLPADYARTKTVDDDTLRRVFDSQQFWREFSQQRAAQPKPTGLVQNQYLTSPDGFRTFANVSLQKCQAIVSKVLAASTLEEYRTMARDLDRLSDLLCRVIDLSDFIRVIHPDPQVQEAATQAYALMFEYMNVLNTTTGLNDQLKKAAANPEVTSQWSDEEKIVAQILIKDFSNSAIHMPPHERQRFVNLSNDISQLGSSFVNGAEPAKSHVSVATNNLRGLDPILVQQIKRWNRTAAVPTTGMIPRLALRSVHDENVRREVYLASRTSSKRQLHRLEELLLKRAELAKLSGYESFAHMTLSDKMAKSPEAVSNFLTALVESNRKLVREELSQLQVMKGAPLQPWDHAYYVHQRVLQYSQARRSRELSAVPEFFSLGTVMQGLSRLFDRLYGVRLVPQEPAPGETWNPDVRRLDVVDEAGRHIAVIYCDLFSRPNKHPNPAHFTLRCSREISAEEVAECASLDQSSHPNDGMATAVDPVTQTLRQLPTIALVCDFPEPGTNGGGRPSLLSEHSVRTLFHEMGHAVHSILGQTRLQSISGTRCATDFAELPSVLMEHFATVPSVLALYARHWRTDEPLSEGMIRSMERDRTAHGSIYGAVENEAQILMALVDQAYHSRPADGGRIDSTALYQQVSQQHSSLPEPADATTPPTSWQGFFGHLYGYGATYYSYIFDRAIANKLWVDVFGAGRHAVDRAAGERYKNEVLRWGGGRSGWECVAGALGSANESNADGRLVEGGDQAMREVGRWGLGRDGVSG.

Residues 1–41 (MKDQLLVPLRRRPWTCQKCLQRLQLPRHQTRRSFETAASPF) constitute a mitochondrion transit peptide. A Zn(2+)-binding site is contributed by His-564. Glu-565 is an active-site residue. Positions 568 and 571 each coordinate Zn(2+).

It belongs to the peptidase M3 family. Requires Zn(2+) as cofactor.

The protein resides in the mitochondrion matrix. It catalyses the reaction Release of an N-terminal octapeptide as second stage of processing of some proteins imported into the mitochondrion.. Its function is as follows. Cleaves proteins, imported into the mitochondrion, to their mature size. While most mitochondrial precursor proteins are processed to the mature form in one step by mitochondrial processing peptidase (MPP), the sequential cleavage by MIP of an octapeptide after initial processing by MPP is a required step for a subgroup of nuclear-encoded precursor proteins destined for the matrix or the inner membrane. This chain is Mitochondrial intermediate peptidase (oct1), found in Aspergillus fumigatus (strain ATCC MYA-4609 / CBS 101355 / FGSC A1100 / Af293) (Neosartorya fumigata).